The sequence spans 331 residues: Fructose-1,6-bisphosphatase class 1 (331 aa).

The Mg(2+) site is built by Glu-80, Asp-98, Leu-100, and Asp-101. Residues 101-104 and Asn-189 contribute to the substrate site; that span reads DGSS. Mg(2+) is bound at residue Glu-261.

This sequence belongs to the FBPase class 1 family. As to quaternary structure, homotetramer. Mg(2+) serves as cofactor.

Its subcellular location is the cytoplasm. It carries out the reaction beta-D-fructose 1,6-bisphosphate + H2O = beta-D-fructose 6-phosphate + phosphate. It functions in the pathway carbohydrate biosynthesis; gluconeogenesis. In Rhodobacter capsulatus (strain ATCC BAA-309 / NBRC 16581 / SB1003), this protein is Fructose-1,6-bisphosphatase class 1.